The sequence spans 395 residues: Tyrosine--tRNA ligase (395 aa).

The 'HIGH' region motif lies at 42–51; the sequence is PTAPDIHLGH. A 'KMSKS' region motif is present at residues 226–230; the sequence is KMSKS. ATP is bound at residue lysine 229. Residues 334–394 enclose the S4 RNA-binding domain; sequence IGLATLLKEA…GKRKFARVTV (61 aa).

This sequence belongs to the class-I aminoacyl-tRNA synthetase family. TyrS type 2 subfamily. Homodimer.

It localises to the cytoplasm. It carries out the reaction tRNA(Tyr) + L-tyrosine + ATP = L-tyrosyl-tRNA(Tyr) + AMP + diphosphate + H(+). Catalyzes the attachment of tyrosine to tRNA(Tyr) in a two-step reaction: tyrosine is first activated by ATP to form Tyr-AMP and then transferred to the acceptor end of tRNA(Tyr). In Haemophilus influenzae (strain 86-028NP), this protein is Tyrosine--tRNA ligase.